The following is a 507-amino-acid chain: Protein zntA (507 aa).

Positions 1–18 (MSIFAYSILAGLAPLLSS) are cleaved as a signal peptide. Asn-31 is a glycosylation site (N-linked (GlcNAc...) asparagine). A helical transmembrane segment spans residues 35-55 (FHILLCISAGLLFAVASLELI). The interval 124–179 (GLNLNNLNQATNLDNNEEDNDNLDNDGENEIENDHDHDHQEDEGGDNDHDHESEEK) is disordered. Residues 125-137 (LNLNNLNQATNLD) show a composition bias toward low complexity. Residues 138-154 (NNEEDNDNLDNDGENEI) are compositionally biased toward acidic residues. A compositionally biased stretch (basic and acidic residues) spans 155 to 179 (ENDHDHDHQEDEGGDNDHDHESEEK). The chain crosses the membrane as a helical span at residues 185 to 205 (IPMYGIGFGFAILIIVESIFS). The segment at 209–264 (GGGGGGGHHSHSHGSLSSSSSNDVISDYISNNNSNNINNNDDDNNNNNNNNDDDDD) is disordered. A compositionally biased stretch (low complexity) spans 221 to 258 (HGSLSSSSSNDVISDYISNNNSNNINNNDDDNNNNNNN). N-linked (GlcNAc...) asparagine glycans are attached at residues Asn-240, Asn-298, Asn-328, Asn-342, and Asn-351. Positions 305–350 (PNIASPVMNKDNNNNDKDKNRNSNKSDIKNSGSINNGNNSGNNNNN) are disordered. Positions 317 to 332 (NNNDKDKNRNSNKSDI) are enriched in basic and acidic residues. The segment covering 333–350 (KNSGSINNGNNSGNNNNN) has biased composition (low complexity). Transmembrane regions (helical) follow at residues 355-375 (LTIT…VVIS), 388-408 (VALA…SLIL), 422-442 (FFYF…SSFL), 451-471 (GAFV…TAIL), and 486-506 (LFSI…FHGA).

Belongs to the ZIP transporter (TC 2.A.5) family.

The protein resides in the membrane. In terms of biological role, may transport divalent cations. May participate, with dstA, in the regulation of the differentiation of stalk cells during development. The protein is Protein zntA (zntA) of Dictyostelium discoideum (Social amoeba).